A 467-amino-acid chain; its full sequence is Glutamyl-tRNA reductase (467 aa).

Residues 49–52 (TCNR), serine 109, 114–116 (EQQ), and glutamine 120 each bind substrate. The Nucleophile role is filled by cysteine 50. 189 to 194 (GAGAMG) lines the NADP(+) pocket. The segment at 446–467 (GFSDTTRYGTSPAQSSSKYHAE) is disordered. Residues 447–467 (FSDTTRYGTSPAQSSSKYHAE) show a composition bias toward polar residues.

Belongs to the glutamyl-tRNA reductase family. Homodimer.

It carries out the reaction (S)-4-amino-5-oxopentanoate + tRNA(Glu) + NADP(+) = L-glutamyl-tRNA(Glu) + NADPH + H(+). Its pathway is porphyrin-containing compound metabolism; protoporphyrin-IX biosynthesis; 5-aminolevulinate from L-glutamyl-tRNA(Glu): step 1/2. In terms of biological role, catalyzes the NADPH-dependent reduction of glutamyl-tRNA(Glu) to glutamate 1-semialdehyde (GSA). The sequence is that of Glutamyl-tRNA reductase from Mycobacterium leprae (strain TN).